The chain runs to 272 residues: Glutamate racemase (272 aa).

Substrate-binding positions include 13–14 and 45–46; these read DS and YG. The active-site Proton donor/acceptor is cysteine 76. 77 to 78 serves as a coordination point for substrate; sequence NT. Cysteine 187 (proton donor/acceptor) is an active-site residue. A substrate-binding site is contributed by 188–189; sequence TH.

It belongs to the aspartate/glutamate racemases family.

The enzyme catalyses L-glutamate = D-glutamate. It functions in the pathway cell wall biogenesis; peptidoglycan biosynthesis. In terms of biological role, provides the (R)-glutamate required for cell wall biosynthesis. In Roseiflexus sp. (strain RS-1), this protein is Glutamate racemase.